Here is a 452-residue protein sequence, read N- to C-terminus: MQLQFLGTLASSEKRKKSQRLFFKNIKSTKNKAGKASIMSSDTNVNKSASPTATAEEQPVEPDGPLPGSDNNQEKKVRLSPAKMSTKNSTDLVEYVDKSHAFLPIIPNTQRGQLEDRLNNQARTIAFLLEQAFRIKEDISACLQGTHGFRKEESLARKLLESHIQTITSIVKKLSQNIEILEDQIRARDQAATGTNFAVHEINIKHLQGVGDLRGRVARCDSSIVKLSGDIHLFRQEHRQIEKAIQEFVPALETLSKNLDMKVMQLLGKIETASSEQTSNLKMVQGDYRHEMNLLEFKFHSLSSNLYEEVENNKKWTENQFLKYRKDHLGHINECLKVLQEKLEKSENKMEEKLLQLSSKVENFINTQKQETQLSKVKHMENKLSKKMEQMEKQIWGELETMQNEYQSGFKSIHDSLSSLQQIQKTKMDLEKYKVQKDLKKLQRKIVELQEV.

2 stretches are compositionally biased toward polar residues: residues 1–11 and 38–55; these read MQLQFLGTLAS and IMSS…TATA. The interval 1 to 85 is disordered; that stretch reads MQLQFLGTLA…KVRLSPAKMS (85 aa). Coiled coils occupy residues 164–192 and 329–452; these read IQTI…DQAA and LGHI…LQEV.

It belongs to the FAM81 family.

The protein is Protein FAM81B (FAM81B) of Homo sapiens (Human).